Here is a 112-residue protein sequence, read N- to C-terminus: Large ribosomal subunit protein eL22 (112 aa).

Belongs to the eukaryotic ribosomal protein eL22 family. As to quaternary structure, component of the large ribosomal subunit.

The protein localises to the cytoplasm. In Encephalitozoon cuniculi (strain GB-M1) (Microsporidian parasite), this protein is Large ribosomal subunit protein eL22 (RPL22).